The primary structure comprises 1300 residues: DNA-directed RNA polymerase subunit beta (1300 aa).

The protein belongs to the RNA polymerase beta chain family. In terms of assembly, the RNAP catalytic core consists of 2 alpha, 1 beta, 1 beta' and 1 omega subunit. When a sigma factor is associated with the core the holoenzyme is formed, which can initiate transcription.

It catalyses the reaction RNA(n) + a ribonucleoside 5'-triphosphate = RNA(n+1) + diphosphate. Functionally, DNA-dependent RNA polymerase catalyzes the transcription of DNA into RNA using the four ribonucleoside triphosphates as substrates. This chain is DNA-directed RNA polymerase subunit beta, found in Chlorobium chlorochromatii (strain CaD3).